The primary structure comprises 153 residues: MRKYIPLVLFIFSWPVLCADIHGRVVRVLDGDTIEVMDSRKAVRIRLVNIDAPEKKQDYGRWSTDMMKSLVAGKTVTVTYFQRDRYGRILGQVYAPDGMNVNQFMVRAGAAWVYEQYNTDPVLPVLQNEARQQKRGLWSDADPVPPWIWRHRK.

The first 19 residues, 1–19 (MRKYIPLVLFIFSWPVLCA), serve as a signal peptide directing secretion. Residues Arg46, Glu54, and Arg88 contribute to the active site.

Belongs to the thermonuclease family.

This is an uncharacterized protein from Escherichia coli.